The sequence spans 229 residues: ADP-ribosylation factor-like protein 6-interacting protein 4 (229 aa).

Over residues 1 to 20 the composition is skewed to basic residues; the sequence is MAHVGSRKRSRSRSRSRSGR. Residues 1–152 are disordered; the sequence is MAHVGSRKRS…EDNDGPVLTD (152 aa). Positions 21–35 are enriched in basic and acidic residues; sequence RGSEKRSKRSSKDAS. Positions 66–87 are enriched in low complexity; sequence SRSSSTSSSSSSSSSASSSSSS. Basic residues predominate over residues 90–117; it reads RKKRAKHKEKKRKKKKKKRKKKLKKRVK. 2 positions are modified to phosphoserine: serine 140 and serine 174. Lysine 191 participates in a covalent cross-link: Glycyl lysine isopeptide (Lys-Gly) (interchain with G-Cter in SUMO2).

This sequence belongs to the ARL6IP4 family. Interacts with ZCCHC17. Interacts with SRSF2. Interacts with ARL6. In terms of tissue distribution, widely expressed. Expressed at high level in testis and thymus.

The protein localises to the nucleus. Its subcellular location is the nucleolus. It is found in the nucleus speckle. Involved in modulating alternative pre-mRNA splicing with either 5' distal site activation or preferential use of 3' proximal site. In Mus musculus (Mouse), this protein is ADP-ribosylation factor-like protein 6-interacting protein 4 (Arl6ip4).